The sequence spans 235 residues: Transcription factor hepR (235 aa).

The tract at residues glutamine 14 to lysine 45 is disordered. The C2H2-type zinc-finger motif lies at isoleucine 175–histidine 205.

It is found in the nucleus. In terms of biological role, transcription factor; part of the gene cluster that mediates the biosynthesis of heptelidic acid (HA), a sesquiterpene lactone that acts as an inhibitor of glyceraldehyde-3-phosphatedehydrogenase (GAPDH) and a growth inhibitor of the salt-tolerant lactic acid bacteria in soy sauce brewing. Both hepR and hepS regulate the transcription of the heptelidic acid cluster, but they are not involved in mutual transcriptional regulation and act with different mechanisms. This is Transcription factor hepR from Aspergillus oryzae (strain ATCC 42149 / RIB 40) (Yellow koji mold).